The primary structure comprises 308 residues: Homogentisate phytyltransferase (308 aa).

A run of 8 helical transmembrane segments spans residues 13 to 33 (PHTIIGTTLSVWAVYLLTILG), 44 to 64 (LDLVFGAWLACLLGNVYIVGL), 104 to 124 (LAIAWGLGLWLGLTVGISLII), 142 to 162 (AALCILTVRGIVVNLGLFLFF), 173 to 193 (ITPIWVLTLFILVFTVAIAIF), 219 to 241 (VFRGTLILLTGCYLAMAIWGLWA), 245 to 263 (LNTAFLIVSHLCLLALLWW), and 279 to 299 (FYQFIWKLFFLEYLLYPLALW).

Belongs to the UbiA prenyltransferase family.

The protein resides in the membrane. The catalysed reaction is phytyl diphosphate + homogentisate + H(+) = 2-methyl-6-phytyl-1,4-benzene-1,4-diol + CO2 + diphosphate. It functions in the pathway cofactor biosynthesis; tocopherol biosynthesis. Involved in the synthesis of tocopherol (vitamin E). Catalyzes the condensation of homogentisate and phytyl diphosphate to form dimethylphytylhydrquinone. This chain is Homogentisate phytyltransferase, found in Synechocystis sp. (strain ATCC 27184 / PCC 6803 / Kazusa).